A 468-amino-acid polypeptide reads, in one-letter code: Trigger factor (468 aa).

The region spanning 162-243 (GDVLTLDLQA…VSQVAARELP (82 aa)) is the PPIase FKBP-type domain. Residues 428-468 (NGEIVDLDDEEDEETEAAEADATEAADAEKADDKAEEKTEG) are disordered. Residues 432-453 (VDLDDEEDEETEAAEADATEAA) show a composition bias toward acidic residues. The segment covering 454–468 (DAEKADDKAEEKTEG) has biased composition (basic and acidic residues).

This sequence belongs to the FKBP-type PPIase family. Tig subfamily.

The protein resides in the cytoplasm. The catalysed reaction is [protein]-peptidylproline (omega=180) = [protein]-peptidylproline (omega=0). Involved in protein export. Acts as a chaperone by maintaining the newly synthesized protein in an open conformation. Functions as a peptidyl-prolyl cis-trans isomerase. This chain is Trigger factor, found in Streptomyces coelicolor (strain ATCC BAA-471 / A3(2) / M145).